A 161-amino-acid polypeptide reads, in one-letter code: uncharacterized protein (161 aa).

This is an uncharacterized protein from Mycoplasma (Bacteriophage L2).